The chain runs to 118 residues: Large ribosomal subunit protein bL19 (118 aa).

It belongs to the bacterial ribosomal protein bL19 family.

In terms of biological role, this protein is located at the 30S-50S ribosomal subunit interface and may play a role in the structure and function of the aminoacyl-tRNA binding site. This chain is Large ribosomal subunit protein bL19, found in Ligilactobacillus salivarius (strain UCC118) (Lactobacillus salivarius).